A 164-amino-acid chain; its full sequence is Protein SprT (164 aa).

A SprT-like domain is found at 12-157; sequence CFLQAESFFK…CRRCRQTLVF (146 aa). His-69 contributes to the Zn(2+) binding site. The active site involves Glu-70. His-73 contributes to the Zn(2+) binding site.

This sequence belongs to the SprT family. It depends on Zn(2+) as a cofactor.

It localises to the cytoplasm. This is Protein SprT from Pseudomonas fluorescens (strain SBW25).